A 277-amino-acid chain; its full sequence is L-aspartate oxidase (277 aa).

The Proton donor/acceptor role is filled by Arg23. FAD is bound by residues Glu106 and 122 to 123 (SL). 2 disordered regions span residues 142–161 (LRRG…PPPA) and 234–277 (DYPA…ETRS). A compositionally biased stretch (pro residues) spans 146-161 (WPPPAPPDLSPRPPPA).

It belongs to the FAD-dependent oxidoreductase 2 family. NadB subfamily. The cofactor is FAD.

The protein localises to the cytoplasm. It carries out the reaction L-aspartate + O2 = iminosuccinate + H2O2. The protein operates within cofactor biosynthesis; NAD(+) biosynthesis; iminoaspartate from L-aspartate (oxidase route): step 1/1. Catalyzes the oxidation of L-aspartate to iminoaspartate, the first step in the de novo biosynthesis of NAD(+). The polypeptide is L-aspartate oxidase (nadB) (Rhodospirillum rubrum).